The following is a 414-amino-acid chain: Translation initiation factor 2 subunit gamma (414 aa).

Residues 8 to 206 form the tr-type G domain; that stretch reads QPEVNIGVVG…AIEKFIPTPP (199 aa). The G1 stretch occupies residues 17–24; the sequence is GHVDHGKT. 4 residues coordinate Mg(2+): aspartate 20, threonine 24, glycine 45, and threonine 47. 20–25 provides a ligand contact to GTP; the sequence is DHGKTT. Residues 45–49 are G2; that stretch reads GMTIK. Residues cysteine 60, cysteine 63, cysteine 75, and cysteine 77 each coordinate Zn(2+). Residues 93–96 form a G3 region; sequence DAPG. GTP is bound by residues 149–152 and 184–186; these read NKVD and SAL. The interval 149 to 152 is G4; sequence NKVD. Residues 184-186 form a G5 region; the sequence is SAL.

Belongs to the TRAFAC class translation factor GTPase superfamily. Classic translation factor GTPase family. EIF2G subfamily. Heterotrimer composed of an alpha, a beta and a gamma chain. Requires Mg(2+) as cofactor.

The enzyme catalyses GTP + H2O = GDP + phosphate + H(+). Its function is as follows. eIF-2 functions in the early steps of protein synthesis by forming a ternary complex with GTP and initiator tRNA. The chain is Translation initiation factor 2 subunit gamma from Aeropyrum pernix (strain ATCC 700893 / DSM 11879 / JCM 9820 / NBRC 100138 / K1).